The following is a 132-amino-acid chain: UPF0299 membrane protein YohJ (132 aa).

Topologically, residues 1-6 are periplasmic; sequence MSKTLN. A helical membrane pass occupies residues 7-27; sequence IIWQYLRAFVLIYACLYAGIF. Residues 28 to 30 are Cytoplasmic-facing; the sequence is IAS. Residues 31–51 form a helical membrane-spanning segment; the sequence is LLPVTIPGSIIGMLILFVLLA. The Periplasmic segment spans residues 52-62; the sequence is LQILPAKWVNP. Residues 63-83 traverse the membrane as a helical segment; the sequence is GCYVLIRYMALLFVPIGVGVM. Residues 84-92 lie on the Cytoplasmic side of the membrane; it reads QYFDLLRAQ. The chain crosses the membrane as a helical span at residues 93 to 113; the sequence is FGPVVVSCAISTLVVFLVVSW. Over 114–132 the chain is Periplasmic; that stretch reads SSQLVHGERKVVGQKGSEE.

It belongs to the UPF0299 family.

Its subcellular location is the cell inner membrane. In Escherichia coli O157:H7, this protein is UPF0299 membrane protein YohJ (yohJ).